Reading from the N-terminus, the 471-residue chain is Ribosome biogenesis protein YTM1 (471 aa).

Positions 10-92 (VTARFTTRDE…ETRLEVEYTR (83 aa)) are ubiquitin-like (UBL) domain. WD repeat units follow at residues 119 to 158 (SRAGAWSGGSVQSGQERILSASYDGLVRVWNTSGDVLATS), 165 to 203 (GRITSLKSAKWLSDKKIVAAGMDNTVRVFKYDEDTRTIT), and 210 to 249 (SHRWGVEDVAVHGPSSRILSASSDNTISLFSSNAKENPVA). Residues 245 to 274 (ENPVAPSSLLPNSTAASNKRQKLSKPDRTV) are disordered. Residues 253 to 262 (LLPNSTAASN) are compositionally biased toward polar residues. 4 WD repeats span residues 285–325 (GHSS…CVDT), 327–366 (TTGHSLLSLCAIPSRNLIATGTSARHITLIDPRVSATQIS), 372–412 (GHKN…TGGQ), and 436–471 (GHGEGVKVFGVRWDKDVGIVSGGEDKKIQINRALGS). A disordered region spans residues 412–440 (QVGEGQQGESVHTIHRQGQSGPGKGHGEG).

The protein belongs to the WD repeat WDR12/YTM1 family. As to quaternary structure, component of the NOP7 complex, composed of ERB1, NOP7 and YTM1. The complex is held together by ERB1, which interacts with NOP7 via its N-terminal domain and with YTM1 via a high-affinity interaction between the seven-bladed beta-propeller domains of the 2 proteins. The NOP7 complex associates with the 66S pre-ribosome. Interacts (via UBL domain) with MDN1 (via VWFA/MIDAS domain).

It is found in the nucleus. Its subcellular location is the nucleolus. The protein resides in the nucleoplasm. Component of the NOP7 complex, which is required for maturation of the 25S and 5.8S ribosomal RNAs and formation of the 60S ribosome. This is Ribosome biogenesis protein YTM1 from Phaeosphaeria nodorum (strain SN15 / ATCC MYA-4574 / FGSC 10173) (Glume blotch fungus).